Here is a 317-residue protein sequence, read N- to C-terminus: ATP synthase gamma chain (317 aa).

It belongs to the ATPase gamma chain family. F-type ATPases have 2 components, CF(1) - the catalytic core - and CF(0) - the membrane proton channel. CF(1) has five subunits: alpha(3), beta(3), gamma(1), delta(1), epsilon(1). CF(0) has three main subunits: a, b and c.

Its subcellular location is the cellular thylakoid membrane. Its function is as follows. Produces ATP from ADP in the presence of a proton gradient across the membrane. The gamma chain is believed to be important in regulating ATPase activity and the flow of protons through the CF(0) complex. The polypeptide is ATP synthase gamma chain (Acaryochloris marina (strain MBIC 11017)).